We begin with the raw amino-acid sequence, 215 residues long: Somatotropin (215 aa).

The first 25 residues, 1–25, serve as a signal peptide directing secretion; that stretch reads MAPGMRVCLLLLIAFTLLGPQRAAA. Residue H44 coordinates Zn(2+). S130 is modified (phosphoserine). E197 serves as a coordination point for Zn(2+).

The protein belongs to the somatotropin/prolactin family.

Its subcellular location is the secreted. Functionally, plays an important role in growth control. Its major role in stimulating body growth is to stimulate the liver and other tissues to secrete IGF1. It stimulates both the differentiation and proliferation of myoblasts. It also stimulates amino acid uptake and protein synthesis in muscle and other tissues. This is Somatotropin (GH1) from Monodelphis domestica (Gray short-tailed opossum).